We begin with the raw amino-acid sequence, 302 residues long: N-acetyl-D-glucosamine kinase (302 aa).

ATP is bound by residues 4-11 (GFDVGGTK) and 133-140 (GFGGGLVY). Zn(2+)-binding residues include H157, C177, C179, and C184.

This sequence belongs to the ROK (NagC/XylR) family. NagK subfamily.

The catalysed reaction is N-acetyl-D-glucosamine + ATP = N-acetyl-D-glucosamine 6-phosphate + ADP + H(+). The protein operates within cell wall biogenesis; peptidoglycan recycling. Functionally, catalyzes the phosphorylation of N-acetyl-D-glucosamine (GlcNAc) derived from cell-wall degradation, yielding GlcNAc-6-P. The polypeptide is N-acetyl-D-glucosamine kinase (Vibrio atlanticus (strain LGP32) (Vibrio splendidus (strain Mel32))).